A 119-amino-acid chain; its full sequence is Small ribosomal subunit protein bS16 (119 aa).

This sequence belongs to the bacterial ribosomal protein bS16 family.

This Amoebophilus asiaticus (strain 5a2) protein is Small ribosomal subunit protein bS16.